The sequence spans 393 residues: Phosphopentomutase (393 aa).

Mn(2+)-binding residues include D11, D282, H287, D323, H324, and H335.

This sequence belongs to the phosphopentomutase family. Mn(2+) is required as a cofactor.

It is found in the cytoplasm. It carries out the reaction 2-deoxy-alpha-D-ribose 1-phosphate = 2-deoxy-D-ribose 5-phosphate. It catalyses the reaction alpha-D-ribose 1-phosphate = D-ribose 5-phosphate. Its pathway is carbohydrate degradation; 2-deoxy-D-ribose 1-phosphate degradation; D-glyceraldehyde 3-phosphate and acetaldehyde from 2-deoxy-alpha-D-ribose 1-phosphate: step 1/2. Functionally, isomerase that catalyzes the conversion of deoxy-ribose 1-phosphate (dRib-1-P) and ribose 1-phosphate (Rib-1-P) to deoxy-ribose 5-phosphate (dRib-5-P) and ribose 5-phosphate (Rib-5-P), respectively. This chain is Phosphopentomutase, found in Caldanaerobacter subterraneus subsp. tengcongensis (strain DSM 15242 / JCM 11007 / NBRC 100824 / MB4) (Thermoanaerobacter tengcongensis).